The primary structure comprises 79 residues: SALFLAMHYTPDTLTAFSSVAHICRDVNYGWLIRYMHANGSSLFFICLYLHIGRGIYYGSYSYTETWNIGIILLFLTMA.

3 helical membrane-spanning segments follow: residues 1–7 (SALFLAM), 31–52 (WLIR…YLHI), and 67–79 (WNIG…LTMA). 2 residues coordinate heme b: His-37 and His-51.

Belongs to the cytochrome b family. In terms of assembly, the cytochrome bc1 complex contains 11 subunits: 3 respiratory subunits (MT-CYB, CYC1 and UQCRFS1), 2 core proteins (UQCRC1 and UQCRC2) and 6 low-molecular weight proteins (UQCRH/QCR6, UQCRB/QCR7, UQCRQ/QCR8, UQCR10/QCR9, UQCR11/QCR10 and a cleavage product of UQCRFS1). This cytochrome bc1 complex then forms a dimer. The cofactor is heme b.

The protein resides in the mitochondrion inner membrane. Its function is as follows. Component of the ubiquinol-cytochrome c reductase complex (complex III or cytochrome b-c1 complex) that is part of the mitochondrial respiratory chain. The b-c1 complex mediates electron transfer from ubiquinol to cytochrome c. Contributes to the generation of a proton gradient across the mitochondrial membrane that is then used for ATP synthesis. The polypeptide is Cytochrome b (MT-CYB) (Dipodomys californicus (California kangaroo rat)).